Consider the following 490-residue polypeptide: Bifunctional protein HldE (490 aa).

The segment at 1-328 (MFSFDALLQA…LRRRILPHAS (328 aa)) is ribokinase. An ATP-binding site is contributed by 205-208 (NRKE). The active site involves D275. A cytidylyltransferase region spans residues 358–490 (FTNGCFDILH…LVARAREGQS (133 aa)).

This sequence in the N-terminal section; belongs to the carbohydrate kinase PfkB family. The protein in the C-terminal section; belongs to the cytidylyltransferase family. Homodimer.

It carries out the reaction D-glycero-beta-D-manno-heptose 7-phosphate + ATP = D-glycero-beta-D-manno-heptose 1,7-bisphosphate + ADP + H(+). It catalyses the reaction D-glycero-beta-D-manno-heptose 1-phosphate + ATP + H(+) = ADP-D-glycero-beta-D-manno-heptose + diphosphate. It participates in nucleotide-sugar biosynthesis; ADP-L-glycero-beta-D-manno-heptose biosynthesis; ADP-L-glycero-beta-D-manno-heptose from D-glycero-beta-D-manno-heptose 7-phosphate: step 1/4. It functions in the pathway nucleotide-sugar biosynthesis; ADP-L-glycero-beta-D-manno-heptose biosynthesis; ADP-L-glycero-beta-D-manno-heptose from D-glycero-beta-D-manno-heptose 7-phosphate: step 3/4. In terms of biological role, catalyzes the phosphorylation of D-glycero-D-manno-heptose 7-phosphate at the C-1 position to selectively form D-glycero-beta-D-manno-heptose-1,7-bisphosphate. Catalyzes the ADP transfer from ATP to D-glycero-beta-D-manno-heptose 1-phosphate, yielding ADP-D-glycero-beta-D-manno-heptose. This Rhodopseudomonas palustris (strain TIE-1) protein is Bifunctional protein HldE.